The chain runs to 630 residues: Telomere repeat-binding protein 5 (630 aa).

3 disordered regions span residues M1–H38, E56–K78, and Y308–R327. Positions G57 to N71 are enriched in low complexity. Residues T309 to S325 show a composition bias toward polar residues. In terms of domain architecture, Ubiquitin-like spans V354–P433. The tract at residues L463–R489 is disordered. The HTH myb-type domain occupies A523–R582. Residues W551–V578 constitute a DNA-binding region (H-T-H motif).

Homodimer. In terms of tissue distribution, expressed ubiquitously.

The protein resides in the nucleus. Functionally, binds specifically to the plant telomeric double-stranded DNA sequences. At least 6 repeats of telomeric sequences are required for binding. The sequence is that of Telomere repeat-binding protein 5 (TRP5) from Arabidopsis thaliana (Mouse-ear cress).